Consider the following 34-residue polypeptide: Photosystem II reaction center protein M (34 aa).

Residues 6 to 26 (LGAIATALFVFIPCVFLILLY) form a helical membrane-spanning segment.

This sequence belongs to the PsbM family. PSII is composed of 1 copy each of membrane proteins PsbA, PsbB, PsbC, PsbD, PsbE, PsbF, PsbH, PsbI, PsbJ, PsbK, PsbL, PsbM, PsbT, PsbX, PsbY, PsbZ, Psb30/Ycf12, peripheral proteins PsbO, CyanoQ (PsbQ), PsbU, PsbV and a large number of cofactors. It forms dimeric complexes.

The protein resides in the cellular thylakoid membrane. One of the components of the core complex of photosystem II (PSII). PSII is a light-driven water:plastoquinone oxidoreductase that uses light energy to abstract electrons from H(2)O, generating O(2) and a proton gradient subsequently used for ATP formation. It consists of a core antenna complex that captures photons, and an electron transfer chain that converts photonic excitation into a charge separation. This subunit is found at the monomer-monomer interface. The sequence is that of Photosystem II reaction center protein M from Acaryochloris marina (strain MBIC 11017).